A 585-amino-acid chain; its full sequence is Probable glucomannan 4-beta-mannosyltransferase 7 (585 aa).

The helical transmembrane segment at 87-107 (VIAPTLQVAVWVCMVMSVMLV) threads the bilayer. D188 is a catalytic residue. Positions 247 and 249 each coordinate substrate. Residue D341 is part of the active site. 4 consecutive transmembrane segments (helical) span residues 420–440 (VVAP…SVMI), 443–463 (LFIP…ITTI), 534–554 (LPEI…LIFH), and 563–583 (LYLQ…NFAC).

Belongs to the glycosyltransferase 2 family. Plant cellulose synthase-like A subfamily.

The protein localises to the golgi apparatus membrane. The catalysed reaction is GDP-mannose + (glucomannan)n = GDP + (glucomannan)n+1.. Its function is as follows. Probable mannan synthase which consists of a 4-beta-mannosyltransferase activity on mannan using GDP-mannose. The beta-1,4-mannan product is the backbone for galactomannan synthesis by galactomannan galactosyltransferase. Galactomannan is a noncellulosic polysaccharides of plant cell wall. This is Probable glucomannan 4-beta-mannosyltransferase 7 from Oryza sativa subsp. japonica (Rice).